The following is a 427-amino-acid chain: MKLRTKAKALRGRLRVPGDKSISHRAVIFGAIAEGQTVIHGLLRGQDVLATIQAFRDLGVTIYEAADSLIIEGRGFKGLKPAQKPLDMGNSGTSMRLLAGLLAAQDFSVQLLGDDSLSRRPMDRITIPLSLMGAELSGQGEKELPPLIVKGCQELRPIHYQLPVASAQVKSAILLAALQTQGETVILEKELTRNHTEEMIEQFGGKLSIAGKQISIKGPQRLQGQILQIPGDISSAAFWLAAGLIVPGSDLVLENVGINPTRTGLLEVIEKMGGQLSYQAVDKDIQSASLRVSYSSLKGVEISGDLIPRLIDELPVIALLATQAQGTTYIRNAQELRVKETDRIQAVTDVLGQMGADIQATEDGMVIRGKTPLHGAAVSTCGDHRIGMMTAIAALLVEEGQVTLERAEAILTSYPDFFKDLERLWHD.

Residues lysine 20, serine 21, and arginine 25 each coordinate 3-phosphoshikimate. Residue lysine 20 coordinates phosphoenolpyruvate. Residues glycine 92 and arginine 120 each coordinate phosphoenolpyruvate. 3-phosphoshikimate contacts are provided by serine 166, glutamine 168, aspartate 312, and lysine 339. Glutamine 168 is a phosphoenolpyruvate binding site. Aspartate 312 (proton acceptor) is an active-site residue. 2 residues coordinate phosphoenolpyruvate: arginine 343 and arginine 385.

It belongs to the EPSP synthase family. In terms of assembly, monomer.

Its subcellular location is the cytoplasm. The catalysed reaction is 3-phosphoshikimate + phosphoenolpyruvate = 5-O-(1-carboxyvinyl)-3-phosphoshikimate + phosphate. The protein operates within metabolic intermediate biosynthesis; chorismate biosynthesis; chorismate from D-erythrose 4-phosphate and phosphoenolpyruvate: step 6/7. Its function is as follows. Catalyzes the transfer of the enolpyruvyl moiety of phosphoenolpyruvate (PEP) to the 5-hydroxyl of shikimate-3-phosphate (S3P) to produce enolpyruvyl shikimate-3-phosphate and inorganic phosphate. The chain is 3-phosphoshikimate 1-carboxyvinyltransferase from Streptococcus equi subsp. zooepidemicus (strain H70).